Consider the following 286-residue polypeptide: Ribonuclease Z (286 aa).

Zn(2+) is bound by residues H61, H63, D65, H66, H153, D176, and H240. Catalysis depends on D65, which acts as the Proton acceptor.

This sequence belongs to the RNase Z family. Homodimer. It depends on Zn(2+) as a cofactor.

The catalysed reaction is Endonucleolytic cleavage of RNA, removing extra 3' nucleotides from tRNA precursor, generating 3' termini of tRNAs. A 3'-hydroxy group is left at the tRNA terminus and a 5'-phosphoryl group is left at the trailer molecule.. Its function is as follows. Zinc phosphodiesterase, which displays some tRNA 3'-processing endonuclease activity. Probably involved in tRNA maturation, by removing a 3'-trailer from precursor tRNA. This chain is Ribonuclease Z, found in Mycolicibacterium gilvum (strain PYR-GCK) (Mycobacterium gilvum (strain PYR-GCK)).